An 881-amino-acid chain; its full sequence is Sodium/sulfate cotransporter 1 (881 aa).

Helical transmembrane passes span 8–28 (GIVA…DWVG), 31–51 (ITFT…VTVA), 61–81 (GLLT…TGGL), 107–127 (MVLS…PILI), 140–160 (LLIP…IGTS), and 186–206 (IFDI…FILL). RCK C-terminal domains are found at residues 212–296 (LPGN…EYGL), 318–402 (VFSA…IKTN), 407–492 (LHAV…FPGL), and 498–584 (EQVD…DKSF). A run of 6 helical transmembrane segments spans residues 601–621 (MIIG…GGLK), 625–645 (YIHL…TGCM), 658–678 (VYLT…TGVA), 684–704 (AIIS…AIYI), 775–795 (FAIV…FILV), and 803–823 (VWIV…LYFL). The interval 854-881 (SLRRQVSHTRTDDSGSSGSPLPAPKIVA) is disordered.

Belongs to the divalent anion:Na+ symporter (DASS) superfamily. Na+/sulfate symporter (TC 2.A.47.4) family.

It localises to the cell membrane. In terms of biological role, na(+)/sulfate cotransporter with a probable high-affinity for sulfate and a proteasome dependent turnover. This chain is Sodium/sulfate cotransporter 1 (SLT1), found in Chlamydomonas reinhardtii (Chlamydomonas smithii).